Reading from the N-terminus, the 118-residue chain is Large ribosomal subunit protein uL18 (118 aa).

This sequence belongs to the universal ribosomal protein uL18 family. Part of the 50S ribosomal subunit; part of the 5S rRNA/L5/L18/L25 subcomplex. Contacts the 5S and 23S rRNAs.

In terms of biological role, this is one of the proteins that bind and probably mediate the attachment of the 5S RNA into the large ribosomal subunit, where it forms part of the central protuberance. This Campylobacter jejuni subsp. jejuni serotype O:2 (strain ATCC 700819 / NCTC 11168) protein is Large ribosomal subunit protein uL18.